Consider the following 795-residue polypeptide: Phenylalanine--tRNA ligase beta subunit (795 aa).

The 110-residue stretch at 39–148 (AGSFHGVVVG…ADAPIGTDIR (110 aa)) folds into the tRNA-binding domain. Residues 401-476 (PKRATITLRR…RVYGYNNIPD (76 aa)) enclose the B5 domain. The Mg(2+) site is built by Asp454, Asp460, Glu463, and Glu464. The FDX-ACB domain maps to 701 to 794 (SRFPANRRDI…LKERFQASLR (94 aa)).

The protein belongs to the phenylalanyl-tRNA synthetase beta subunit family. Type 1 subfamily. Tetramer of two alpha and two beta subunits. Mg(2+) serves as cofactor.

It is found in the cytoplasm. The catalysed reaction is tRNA(Phe) + L-phenylalanine + ATP = L-phenylalanyl-tRNA(Phe) + AMP + diphosphate + H(+). The polypeptide is Phenylalanine--tRNA ligase beta subunit (Shigella flexneri).